We begin with the raw amino-acid sequence, 183 residues long: Nucleoside triphosphate pyrophosphatase (183 aa).

The active-site Proton acceptor is Asp71.

This sequence belongs to the Maf family. A divalent metal cation is required as a cofactor.

It localises to the cytoplasm. The enzyme catalyses a ribonucleoside 5'-triphosphate + H2O = a ribonucleoside 5'-phosphate + diphosphate + H(+). It carries out the reaction a 2'-deoxyribonucleoside 5'-triphosphate + H2O = a 2'-deoxyribonucleoside 5'-phosphate + diphosphate + H(+). In terms of biological role, nucleoside triphosphate pyrophosphatase. May have a dual role in cell division arrest and in preventing the incorporation of modified nucleotides into cellular nucleic acids. The sequence is that of Nucleoside triphosphate pyrophosphatase from Campylobacter jejuni subsp. jejuni serotype O:2 (strain ATCC 700819 / NCTC 11168).